Here is a 625-residue protein sequence, read N- to C-terminus: Endoglucanase 13 (625 aa).

The N-terminal stretch at 1–34 is a signal peptide; sequence MAATMNKTPATTFLLIPAAASLVLLLAAAASVEA. The active-site Nucleophile is Asp-91. His-427 is an active-site residue. An N-linked (GlcNAc...) asparagine glycan is attached at Asn-440. Catalysis depends on residues Asp-479 and Glu-488. The tract at residues 509–530 is disordered; the sequence is ADNTPEYTPAPNAPSPSNGGSP.

The protein belongs to the glycosyl hydrolase 9 (cellulase E) family.

The protein localises to the secreted. The catalysed reaction is Endohydrolysis of (1-&gt;4)-beta-D-glucosidic linkages in cellulose, lichenin and cereal beta-D-glucans.. The protein is Endoglucanase 13 (GLU6) of Oryza sativa subsp. indica (Rice).